A 1220-amino-acid chain; its full sequence is Putative cell agglutination protein SPAPB2C8.01 (1220 aa).

Residues 1–21 (MAVSRLLILICLYSFVTFAYP) form the signal peptide. 4 N-linked (GlcNAc...) asparagine glycosylation sites follow: Asn44, Asn72, Asn131, and Asn160. 24 consecutive repeat copies span residues 110–145 (NTITTTLYSGSLEFTTTLDSANGTTPATIEVVEPAA), 146–181 (GTVTTTIYSGTTPFNTTLASATDTVPGTVEVVEPEA), 182–217 (GTVTTTVYSGTQEYTTTLATASGTVSGTVEVVDTAA), 218–253 (GTVTTTIYSGTTPFNTTLASATDTVPGTVEVVEPEA), 254–289 (GTVTTTVYSGTQEYTTTLATASGTVSGTVEVVDTAA), 290–325 (GTVTTTIYSGTTPFNTTLASATDTVPGTVEVVEPEA), 326–361 (GTVTTTVYSGTQEYTTTLATASGTVSGTVEVVDTAA), 362–397 (GTVTTTIYSGTTPFNTTLASATDTVPGTVEVVEPEA), 398–433 (GTVTTTVYSGTQEYTTTLATASGTVSGTVEVVDTAA), 434–469 (GTVTTTIYSGTTPFNTTLASATDTVPGTVEVVEPEA), 470–505 (GTVTTTVYSGTQEYTTTLATASGTVSGTVEVVDTAA), 506–541 (GTVTTTIYSGTTPFNTTLASATDTVPGTVEVVEPEA), 542–577 (GTVTTTVYSGTQEYTTTLATASGTVSGTVEVVDTAA), 578–613 (GTVTTTIYSGTTPFNTTLASATDTVPGTVEVVEPEA), 614–649 (GTVTTTVYSGTQEYTTTLATASGTVSGTVEVIEPAA), 650–685 (GTVTTTVYSGTQEYTTTLATASGTVSGTVEVIEPAA), 686–721 (GTVTSTVYSGTQEYTTTLATASGTVSGTVEVIEPAA), 722–757 (GTVTTTVYSGTQEYTTTLATASGTVSGTVEVIEPAA), 758–793 (GTVTTTVYSGSEVYTTTLASASESVPGTVEVVDPEA), 794–829 (GSVTTTIYSGSVEYTTVLADASGSVTGTVEVVEPAA), 830–865 (GTVTTTVYSGSEVYTTTLASASESVPGTVEVVDPEA), 866–901 (GSVTTTIYSGSVEYTTVLADASGSVTGTVEVVEPAA), 902–937 (GTVTGTLTSGSQFFTTTIAQASGSVSGNVEVIEPSG), and 938–973 (STVTSTIYSGSESFTTTLAVGSGTIPGTVEVILPAP). Residues 110 to 973 (NTITTTLYSG…GTVEVILPAP (864 aa)) are 24 X 36 AA approximate tandem repeats. Asn232 is a glycosylation site (N-linked (GlcNAc...) asparagine). The N-linked (GlcNAc...) asparagine glycan is linked to Asn304. Asn376 carries N-linked (GlcNAc...) asparagine glycosylation. Asn448 carries N-linked (GlcNAc...) asparagine glycosylation. Residue Asn520 is glycosylated (N-linked (GlcNAc...) asparagine). An N-linked (GlcNAc...) asparagine glycan is attached at Asn592. Residues 1039-1202 (FTQPAYFGSS…YAATSYAYTA (164 aa)) enclose the PA14 domain.

It belongs to the mam3/map4 family.

The protein resides in the cell surface. In terms of biological role, may be involved in agglutination during conjugation or other aspects of colony formation. This is Putative cell agglutination protein SPAPB2C8.01 from Schizosaccharomyces pombe (strain 972 / ATCC 24843) (Fission yeast).